The sequence spans 159 residues: Phosphopantetheine adenylyltransferase (159 aa).

His16 contacts ATP. 3 residues coordinate substrate: Lys40, Met72, and Arg86. ATP contacts are provided by residues 87 to 89 (GLR), Glu97, and 122 to 128 (YQYLSAS).

This sequence belongs to the bacterial CoaD family. Homohexamer. Mg(2+) is required as a cofactor.

Its subcellular location is the cytoplasm. The enzyme catalyses (R)-4'-phosphopantetheine + ATP + H(+) = 3'-dephospho-CoA + diphosphate. Its pathway is cofactor biosynthesis; coenzyme A biosynthesis; CoA from (R)-pantothenate: step 4/5. Reversibly transfers an adenylyl group from ATP to 4'-phosphopantetheine, yielding dephospho-CoA (dPCoA) and pyrophosphate. The polypeptide is Phosphopantetheine adenylyltransferase (Dehalococcoides mccartyi (strain CBDB1)).